Consider the following 614-residue polypeptide: uncharacterized protein (614 aa).

The disordered stretch occupies residues 23–68 (YPIPSHNGDGESEKNSSDSTSSKVNAKVTSSLQGAPSTNDENSVSP). The span at 49–68 (KVTSSLQGAPSTNDENSVSP) shows a compositional bias: polar residues.

This sequence to C.trachomatis CT875.

This is an uncharacterized protein from Chlamydia muridarum (strain MoPn / Nigg).